The following is a 203-amino-acid chain: Glycerol-3-phosphate acyltransferase (203 aa).

5 helical membrane passes run 10 to 30 (LLLG…FGIM), 60 to 80 (LAAF…VFLA), 88 to 108 (AAQL…FLGF), 118 to 138 (LGTL…IWAI), and 162 to 182 (FTLG…LIFL).

Belongs to the PlsY family. As to quaternary structure, probably interacts with PlsX.

The protein localises to the cell inner membrane. It catalyses the reaction an acyl phosphate + sn-glycerol 3-phosphate = a 1-acyl-sn-glycero-3-phosphate + phosphate. It participates in lipid metabolism; phospholipid metabolism. In terms of biological role, catalyzes the transfer of an acyl group from acyl-phosphate (acyl-PO(4)) to glycerol-3-phosphate (G3P) to form lysophosphatidic acid (LPA). This enzyme utilizes acyl-phosphate as fatty acyl donor, but not acyl-CoA or acyl-ACP. The chain is Glycerol-3-phosphate acyltransferase from Jannaschia sp. (strain CCS1).